Consider the following 345-residue polypeptide: Tetraacyldisaccharide 4'-kinase (345 aa).

61–68 serves as a coordination point for ATP; sequence TAGGTGKT.

It belongs to the LpxK family.

It catalyses the reaction a lipid A disaccharide + ATP = a lipid IVA + ADP + H(+). It participates in glycolipid biosynthesis; lipid IV(A) biosynthesis; lipid IV(A) from (3R)-3-hydroxytetradecanoyl-[acyl-carrier-protein] and UDP-N-acetyl-alpha-D-glucosamine: step 6/6. Its function is as follows. Transfers the gamma-phosphate of ATP to the 4'-position of a tetraacyldisaccharide 1-phosphate intermediate (termed DS-1-P) to form tetraacyldisaccharide 1,4'-bis-phosphate (lipid IVA). The chain is Tetraacyldisaccharide 4'-kinase from Xanthomonas euvesicatoria pv. vesicatoria (strain 85-10) (Xanthomonas campestris pv. vesicatoria).